The chain runs to 508 residues: Photosystem II CP47 reaction center protein (508 aa).

6 helical membrane passes run 21–36, 101–115, 140–156, 203–218, 237–252, and 457–472; these read AVHI…WAGS, IVFS…IWHW, GIHL…FGAF, IAAG…FHLS, VLSS…AFVV, and SFAL…HGAR.

It belongs to the PsbB/PsbC family. PsbB subfamily. In terms of assembly, PSII is composed of 1 copy each of membrane proteins PsbA, PsbB, PsbC, PsbD, PsbE, PsbF, PsbH, PsbI, PsbJ, PsbK, PsbL, PsbM, PsbT, PsbX, PsbY, PsbZ, Psb30/Ycf12, at least 3 peripheral proteins of the oxygen-evolving complex and a large number of cofactors. It forms dimeric complexes. It depends on Binds multiple chlorophylls. PSII binds additional chlorophylls, carotenoids and specific lipids. as a cofactor.

Its subcellular location is the plastid. The protein localises to the chloroplast thylakoid membrane. Its function is as follows. One of the components of the core complex of photosystem II (PSII). It binds chlorophyll and helps catalyze the primary light-induced photochemical processes of PSII. PSII is a light-driven water:plastoquinone oxidoreductase, using light energy to abstract electrons from H(2)O, generating O(2) and a proton gradient subsequently used for ATP formation. In Trachelium caeruleum (Blue throatwort), this protein is Photosystem II CP47 reaction center protein.